A 1061-amino-acid chain; its full sequence is Ribonuclease E (1061 aa).

The S1 motif domain occupies 39–119 (ANIYKGKITR…GNKGAALTTF (81 aa)). Residues 57-112 (FVDYGAERHGFLPLKEIAREYFPANYSAHGRPNIKDVLREGQEVIVQIDKEERGNK) form an interaction with RNA region. The tract at residues 169 to 170 (RT) is interaction with RNA 5'-terminal monophosphate. Aspartate 303 and aspartate 346 together coordinate Mg(2+). Zn(2+) is bound by residues cysteine 404 and cysteine 407. The segment at 404 to 407 (CPRC) is required for zinc-mediated homotetramerization and catalytic activity. Disordered stretches follow at residues 532–565 (FAMP…PAAP), 586–731 (EETK…KVRY), and 752–822 (EPIV…RYPT). Positions 536 to 546 (DVPPAPTPAEP) are enriched in pro residues. Positions 547–565 (AAPVVAPAPKAAPATPAAP) are enriched in low complexity. 3 stretches are compositionally biased toward basic and acidic residues: residues 598–608 (AEAKPERQQDR), 615–640 (NRRD…EENR), and 652–690 (ETRE…KRQA). The span at 796 to 814 (RRSRRSPRHLRVSGQRRRR) shows a compositional bias: basic residues. Residues 833-850 (ASPELASGKVWIRYPIVR) are interaction with enolase. The interval 1021–1061 (EAPRHSDWQRPTFAFEGKGAAGGHTATHHASAAPARPQPVE) is interaction with PNPase. A disordered region spans residues 1031-1061 (PTFAFEGKGAAGGHTATHHASAAPARPQPVE). The span at 1043-1055 (GHTATHHASAAPA) shows a compositional bias: low complexity.

It belongs to the RNase E/G family. RNase E subfamily. Component of the RNA degradosome, which is a multiprotein complex involved in RNA processing and mRNA degradation. Within the RNA degradosome, RNase E assembles into a homotetramer formed by a dimer of dimers. Tetramerization is essential for catalytic activity, but not for RNA-binding. Interacts with RhlB, PNPase (pnp) and enolase (eno). Interacts with DeaD at reduced temperature. Zn(2+) is required as a cofactor. Requires Mg(2+) as cofactor.

Its subcellular location is the cytoplasm. The protein resides in the cell inner membrane. It carries out the reaction Endonucleolytic cleavage of single-stranded RNA in A- and U-rich regions.. Its activity is regulated as follows. The presence of a 5'-monophosphate on substrate RNA accelerates its cleavage by catalytically activating the enzyme. Binding to the membrane stabilizes protein structure and increases affinity for the substrate. In terms of biological role, endoribonuclease that plays a central role in RNA processing and decay. Required for the maturation of 5S and 16S rRNAs and the majority of tRNAs. Also involved in the degradation of most mRNAs. Can also process other RNA species, such as RNAI, a molecule that controls the replication of ColE1 plasmid, and the cell division inhibitor DicF-RNA. It initiates the decay of RNAs by cutting them internally near their 5'-end. It is able to remove poly(A) tails by an endonucleolytic process. Required to initiate rRNA degradation during both starvation and quality control; acts after RNase PH (rph) exonucleolytically digests the 3'-end of the 16S rRNA. Degradation of 16S rRNA leads to 23S rRNA degradation. Processes the 3 tRNA(Pro) precursors immediately after the 3'-CCA to generate the mature ends. Functionally, prefers 5'-monophosphorylated substrates over 5'-triphosphorylated substrates. 5'-monophosphate-assisted cleavage requires at least 2 and preferably 3 or more unpaired 5'-terminal nucleotides. The optimal spacing between the 5' end and the scissile phosphate appears to be 8 nucleotides. Any sequence of unpaired nucleotides at the 5'-end is tolerated. The chain is Ribonuclease E from Escherichia coli (strain K12).